Here is a 263-residue protein sequence, read N- to C-terminus: Glucosamine-6-phosphate deaminase (263 aa).

The active-site Proton acceptor; for enolization step is aspartate 67. Asparagine 136 functions as the For ring-opening step in the catalytic mechanism. The Proton acceptor; for ring-opening step role is filled by histidine 138. Glutamate 143 acts as the For ring-opening step in catalysis.

It belongs to the glucosamine/galactosamine-6-phosphate isomerase family. NagB subfamily. Homohexamer.

It catalyses the reaction alpha-D-glucosamine 6-phosphate + H2O = beta-D-fructose 6-phosphate + NH4(+). It participates in amino-sugar metabolism; N-acetylneuraminate degradation; D-fructose 6-phosphate from N-acetylneuraminate: step 5/5. Functionally, catalyzes the reversible isomerization-deamination of glucosamine 6-phosphate (GlcN6P) to form fructose 6-phosphate (Fru6P) and ammonium ion. The chain is Glucosamine-6-phosphate deaminase from Cellvibrio japonicus (strain Ueda107) (Pseudomonas fluorescens subsp. cellulosa).